Reading from the N-terminus, the 198-residue chain is Probable GTP-binding protein EngB (198 aa).

Positions 22–197 (TLPEYAFIGR…LDYIEGINNS (176 aa)) constitute an EngB-type G domain. GTP contacts are provided by residues 30-37 (GRSNVGKS), 57-61 (GKTQL), 75-78 (DLPG), 142-145 (TKAD), and 175-178 (ITSA). Mg(2+)-binding residues include Ser37 and Thr59.

Belongs to the TRAFAC class TrmE-Era-EngA-EngB-Septin-like GTPase superfamily. EngB GTPase family. Mg(2+) serves as cofactor.

Its function is as follows. Necessary for normal cell division and for the maintenance of normal septation. In Christiangramia forsetii (strain DSM 17595 / CGMCC 1.15422 / KT0803) (Gramella forsetii), this protein is Probable GTP-binding protein EngB.